A 406-amino-acid chain; its full sequence is Tryptophan synthase beta chain (406 aa).

N6-(pyridoxal phosphate)lysine is present on Lys-97.

Belongs to the TrpB family. As to quaternary structure, tetramer of two alpha and two beta chains. Pyridoxal 5'-phosphate serves as cofactor.

It catalyses the reaction (1S,2R)-1-C-(indol-3-yl)glycerol 3-phosphate + L-serine = D-glyceraldehyde 3-phosphate + L-tryptophan + H2O. Its pathway is amino-acid biosynthesis; L-tryptophan biosynthesis; L-tryptophan from chorismate: step 5/5. In terms of biological role, the beta subunit is responsible for the synthesis of L-tryptophan from indole and L-serine. This chain is Tryptophan synthase beta chain, found in Lacticaseibacillus paracasei (strain ATCC 334 / BCRC 17002 / CCUG 31169 / CIP 107868 / KCTC 3260 / NRRL B-441) (Lactobacillus paracasei).